The sequence spans 513 residues: MQLNPSEISELIKSRISGLGADAEVRNTGTVISVTDGICRVHGLSGVMQGEMLEFPGNTYGLALNLERDSVGAVVLGEYEHISEGDTVKCTGRILEVPVGKELLGRVVNTLGQPIDGKGPINAKETDVIEKVAPGVIARQSVSQPVQTGLKSIDAMVPIGRGQRELIIGDRQTGKTAVAVDSIINQKGKGVFCVYVAIGQKASTISNVVRKLEEHGAMEYTIVVAATASDSAAMQYLAAYAGCTMGEYFRDRGEDALIVYDDLTKQAWAYRQVSLLLRRPPGREAYPGDVFYLHSRLLERAARVNEDYVAKFTNGAVTGKTGSLTALPVIETQAGDVSAFVPTNVISITDGQIFLETDLFNAGIRPAINAGISVSRVGGAAQTKVIKKLSGGIRTDLAQYRELAAFAQFASDLDDATRKQLERGRRVTELLKQPQYQPLQVWQLAASLYAANNGFLDNVDVKDILPFEKGLHDHLKTKFADLVNRIEDTKDLSKEDEAALRAAIEDFRKSAAF.

169-176 lines the ATP pocket; sequence GDRQTGKT.

This sequence belongs to the ATPase alpha/beta chains family. F-type ATPases have 2 components, CF(1) - the catalytic core - and CF(0) - the membrane proton channel. CF(1) has five subunits: alpha(3), beta(3), gamma(1), delta(1), epsilon(1). CF(0) has three main subunits: a(1), b(2) and c(9-12). The alpha and beta chains form an alternating ring which encloses part of the gamma chain. CF(1) is attached to CF(0) by a central stalk formed by the gamma and epsilon chains, while a peripheral stalk is formed by the delta and b chains.

It is found in the cell inner membrane. The catalysed reaction is ATP + H2O + 4 H(+)(in) = ADP + phosphate + 5 H(+)(out). In terms of biological role, produces ATP from ADP in the presence of a proton gradient across the membrane. The alpha chain is a regulatory subunit. The sequence is that of ATP synthase subunit alpha from Cupriavidus metallidurans (strain ATCC 43123 / DSM 2839 / NBRC 102507 / CH34) (Ralstonia metallidurans).